The following is a 279-amino-acid chain: ATP-dependent Clp protease proteolytic subunit-related protein 2, chloroplastic (279 aa).

Residues 1–54 constitute a chloroplast transit peptide; that stretch reads MAVSFNTTLHQPSLSPSCSIKLYSGLKPQSASFLASGYQNLNKEFYGRVYKSLQ.

Belongs to the peptidase S14 family. In terms of assembly, component of the chloroplastic Clp protease core complex which consist of at least 16 proteins: CLPP4 (3 copies), CLPP5 (3 copies), CLPR4 (2 copies), ClpP1 (1 copy), CLPP6 (1 copy), CLPR2 (1 copy), CLPT1 (1 copy), CLPT2 (1 copy) and 3 copies of CLPP3 and/or CLPR1 and/or CLPR3. The core complex is organized in two heptameric rings, one containing CLPP3,4,5,6 in a 1:2:3:1 ratio and the other CLPP1 and CLPR1,2,3,4 in a 3:1:1:1:1 ratio. In terms of tissue distribution, expressed at least in leaves and roots.

The protein resides in the plastid. The protein localises to the chloroplast. Its function is as follows. Required for chloroplast development and integrity. Involved in the regulation of plastoglobules formation. The sequence is that of ATP-dependent Clp protease proteolytic subunit-related protein 2, chloroplastic from Arabidopsis thaliana (Mouse-ear cress).